The chain runs to 396 residues: Proteinase-activated receptor 4 (396 aa).

Residues 1–16 (MCWPLLYPLVLGLSIS) form the signal peptide. Positions 17–59 (LAEGIQTPSIYDDVESTRGSHEGPLGPTVELKEPKSSDKPNPR) are cleaved as a propeptide — removed for receptor activation. Residues 28–62 (DDVESTRGSHEGPLGPTVELKEPKSSDKPNPRGYP) form a disordered region. A compositionally biased stretch (basic and acidic residues) spans 46–57 (ELKEPKSSDKPN). The Extracellular segment spans residues 60-94 (GYPGKFCANDSDTLELPASSQALLLGWVPTRLVPA). N-linked (GlcNAc...) asparagine glycosylation is present at Asn-68. A helical membrane pass occupies residues 95 to 115 (LYGLVVAVGLPANGLALWVLA). The Cytoplasmic portion of the chain corresponds to 116 to 120 (TRVPR). Residues 121-141 (LPSTILLMNLAVADLLLALVL) traverse the membrane as a helical segment. Topologically, residues 142–162 (PPRLAYHLRGQRWPFGEAACR) are extracellular. A disulfide bridge links Cys-161 with Cys-240. A helical transmembrane segment spans residues 163–183 (VATAALYGHMYGSVLLLAAVS). Over 184–203 (LDRYLALVHPLRARALRGQR) the chain is Cytoplasmic. The chain crosses the membrane as a helical span at residues 204–224 (LTTGLCLVAWLSAATLALPLT). Over 225-255 (LHRQTFRLAGSDRMLCHDALPLTEQTSHWRP) the chain is Extracellular. The chain crosses the membrane as a helical span at residues 256–276 (AFICLAVLGCFVPLLAMGLCY). At 277–295 (GATLRALAANGQRYSHALR) the chain is on the cytoplasmic side. A helical transmembrane segment spans residues 296-316 (LTALVLFSAVASFTPSNVLLV). The Extracellular segment spans residues 317-331 (LHYSNPSPEAWGNLY). The chain crosses the membrane as a helical span at residues 332 to 355 (GAYVPSLALSTLNSCVDPFIYYYV). The Cytoplasmic portion of the chain corresponds to 356 to 396 (SHEFREKVRAMLCRQPEASSSSQASREAGSRGTAICSSTLL).

The protein belongs to the G-protein coupled receptor 1 family. A proteolytic cleavage generates a new N-terminus that functions as a tethered ligand. In terms of tissue distribution, highly expressed in the spleen. Slight expression in the heart, lung, skeletal muscle and kidney. No detectable expression in brain, liver or testis. Also detected in platelets.

It is found in the cell membrane. Receptor for activated thrombin or trypsin coupled to G proteins that stimulate phosphoinositide hydrolysis. May play a role in platelets activation. The protein is Proteinase-activated receptor 4 (F2rl3) of Mus musculus (Mouse).